A 694-amino-acid chain; its full sequence is MLKSLTVKFNKVNPMEGRMEKKLCPNLSSLSQPTIAQGDNQSEKEPLRSRTPITFEKSHSKEDNSTGENSLRDFTPNPDPECRAELTRTMAEMEKTRTGKERPVSFKTKVLETSIINEYTDAHLHNLVERMRERTALYKKTLTEEENFPEVEASSQTAMSTNISPKQENNSKLKEHQDTFSFKPQRVPVKEHLRRMILPRSIDSYTDRVYLLWLLLVTIAYNWNCWLLPVRLVFPCQTPDNKNYWIITDIVCDIIYLCDILLIQPRLQFVRGGEIIVDSNELKRNYRSSTKFRMDVASLLPFEVLYIFFGVNPIFRANRILKYTSFFEFNHHLESIMDKAYVYRVIRTTGYLLFLLHINACVYYWASDYEGIGSTKWVYNGEGNKYLRCFYWAVRTLITIGGLPEPQTSFEIVFQFLNFFSGVFVFSSLIGQMRDVIGAATANQNYFQACMDHIIAYMNKYSIPQSVQYRVRTWLEYTWNSQRILDESNLLENLPTAMQLSIALDINFSIIDKVELFKGCDTQMIYDLLLRLKSTIYLPGDFVCKKGEIGKEMYIIKHGEVQVLGGPDGAQVLVTLKAGSVFGEISLLAKGGGNRRTADVVAHGFANLLTLDKKTLQEILLHYPTSKKLLMKKAKILLSQKGKTTQAIPARPGPAFLFPPKEETPRMLKVLLGNTGKVDLGRLLKGKRKTTTQK.

Residues 1 to 210 are Cytoplasmic-facing; it reads MLKSLTVKFN…SIDSYTDRVY (210 aa). 2 disordered regions span residues 24 to 82 and 146 to 177; these read CPNL…DPEC and ENFP…KEHQ. 2 stretches are compositionally biased toward polar residues: residues 26 to 40 and 153 to 168; these read NLSS…QGDN and ASSQ…PKQE. The chain crosses the membrane as a helical span at residues 211 to 234; that stretch reads LLWLLLVTIAYNWNCWLLPVRLVF. Over 235–241 the chain is Extracellular; it reads PCQTPDN. A helical membrane pass occupies residues 242–262; the sequence is KNYWIITDIVCDIIYLCDILL. Residues 263–291 lie on the Cytoplasmic side of the membrane; that stretch reads IQPRLQFVRGGEIIVDSNELKRNYRSSTK. Residues 292–309 traverse the membrane as a helical segment; it reads FRMDVASLLPFEVLYIFF. Residues 310–312 are Extracellular-facing; it reads GVN. A helical membrane pass occupies residues 313-327; it reads PIFRANRILKYTSFF. At 328–340 the chain is on the cytoplasmic side; it reads EFNHHLESIMDKA. An ion conduction pathway region spans residues 340–439; that stretch reads AYVYRVIRTT…IGQMRDVIGA (100 aa). Residues 341–363 form a helical membrane-spanning segment; the sequence is YVYRVIRTTGYLLFLLHINACVY. The Extracellular portion of the chain corresponds to 364–385; that stretch reads YWASDYEGIGSTKWVYNGEGNK. Helical transmembrane passes span 386–412 and 413–437; these read YLRC…SFEI and VFQF…RDVI. Positions 399 to 402 are selectivity filter; the sequence is TIGG. Residues 438–694 are Cytoplasmic-facing; that stretch reads GAATANQNYF…KGKRKTTTQK (257 aa). Positions 442-518 are C-linker; the sequence is ANQNYFQACM…SIIDKVELFK (77 aa). Residues 522 to 638 form a cyclic nucleotide-binding domain region; it reads TQMIYDLLLR…LLMKKAKILL (117 aa). 3',5'-cyclic GMP contacts are provided by Gly-583, Glu-584, Arg-596, and Thr-597.

It belongs to the cyclic nucleotide-gated cation channel (TC 1.A.1.5) family. CNGB3 subfamily. As to quaternary structure, forms heterotetrameric channels composed of CNGA3 and CNGB3 subunits with 3:1 stoichiometry. Small subset of retinal photoreceptor cells and testis.

The protein localises to the cell membrane. The enzyme catalyses Ca(2+)(in) = Ca(2+)(out). It catalyses the reaction Na(+)(in) = Na(+)(out). The catalysed reaction is K(+)(in) = K(+)(out). It carries out the reaction NH4(+)(in) = NH4(+)(out). The enzyme catalyses Rb(+)(in) = Rb(+)(out). It catalyses the reaction Li(+)(in) = Li(+)(out). The catalysed reaction is Cs(+)(in) = Cs(+)(out). In terms of biological role, pore-forming subunit of the cone cyclic nucleotide-gated channel. Mediates cone photoresponses at bright light converting transient changes in intracellular cGMP levels into electrical signals. In the dark, cGMP levels are high and keep the channel open enabling a steady inward current carried by Na(+) and Ca(2+) ions that leads to membrane depolarization and neurotransmitter release from synaptic terminals. Upon photon absorption cGMP levels decline leading to channel closure and membrane hyperpolarization that ultimately slows neurotransmitter release and signals the presence of light, the end point of the phototransduction cascade. Conducts cGMP- and cAMP-gated ion currents, with permeability for monovalent and divalent cations. This Mus musculus (Mouse) protein is Cyclic nucleotide-gated channel beta-3.